The chain runs to 542 residues: MSLLHCENSCGSSQSESDCCAAMAASSCGTAAKDDSVSGTASTVTLSSSFMEEIQGYDVEFDPPLESKYECPICLMALREAVQTPCGHRFCKACIIKSIRDAGHKCPVDNEILLENQLFPDNFAKREILSLMVKCPNEGCLHKMELRHLEEHQAHCEFALMSCPQCQRPFQKCHLNIHILKECPRRQVPCENCAVSMAFEDKEIHEQNCPLANVICEYCNTMLIREQMPNHYDLDCPTAPVPCTFSAFGCHEKMQRNHLARHLQENTQSHMRMMAQAVQTLSLAVAPVPQCTMPLYDSVPPTRPSSGRHSEVHNFQETIQQLEGRLVRQDHQIRELTAKMETQSMYVNELKRTIRTLEDKVAEIEAQQCNGIYIWKIGNFGMHLKSQEEEKPVVIHSPGFYTGKPGYKLCMRLHLQLPSAQRCANYISLFVHTMQGEYDSHLPWPFQGTIRLTILDQSEAAVRQNHEEIMDAKPELLAFQRPTIPRNPKGFGYVTFMHLEALRQRTFIKDDTLLVRCEVSTRFDMGSLRREGFQPRSTDSGI.

Positions M1–I374 are interaction with TAX1BP1. Residues C71–N110 form an RING-type; degenerate zinc finger. K125 participates in a covalent cross-link: Glycyl lysine isopeptide (Lys-Gly) (interchain with G-Cter in SUMO); alternate. Residue K125 forms a Glycyl lysine isopeptide (Lys-Gly) (interchain with G-Cter in ubiquitin); alternate linkage. A Glycyl lysine isopeptide (Lys-Gly) (interchain with G-Cter in SUMO) cross-link involves residue K143. 2 consecutive TRAF-type zinc fingers follow at residues E151–E203 and I204–A260. Residues S310–Q368 are a coiled coil. Residue K339 forms a Glycyl lysine isopeptide (Lys-Gly) (interchain with G-Cter in ubiquitin) linkage. The MATH domain maps to N370–V519. An interaction with TANK region spans residues W375–I542. Residue K473 forms a Glycyl lysine isopeptide (Lys-Gly) (interchain with G-Cter in SUMO) linkage.

Belongs to the TNF receptor-associated factor family. A subfamily. Homotrimer. Homooligomer. N-terminal region is dimeric while C-terminal region is trimeric; maybe providing a mode of oligomerization. Upon IL1B treatment, forms a complex with PELI1, IRAK1, IRAK4 and MYD88; this complex recruits MAP3K7/TAK1, TAB1 and TAB2 to mediate NF-kappa-B activation. Direct binding of SMAD6 to PELI1 prevents the complex formation and hence negatively regulates IL1R-TLR signaling and eventually NF-kappa-B-mediated gene expression. Binds to TNFRSF5/CD40 and TNFRSF11A/RANK. Associates with NGFR, TNFRSF17, IRAK2, IRAK3, RIPK2, MAP3K1, MAP3K5, MAP3K14, CSK, TRAF, TRAF-interacting protein TRIP and TNF receptor associated protein TDP2. Interacts with IL17R. Interacts with SQSTM1 bridging NTRK1 and NGFR. Forms a ternary complex with SQSTM1 and PRKCZ. Interacts with PELI2 and PELI3. Binds UBE2V1. Interacts with TAX1BP1; this interaction mediates deubiquitination of TRAF6 and inhibition of NF-kappa-B activation. Interacts with ZNF675. Interacts with ARRB1 and ARRB2. Interacts with MAP3K7 and TAB1/MAP3K7IP1; during IL-1 signaling. Interacts with UBE2N. Interacts with TGFBR1, HDAC1 and RANGAP1. Interacts with AKT1, AKT2 and AKT3. Interacts (via TRAF domains) with NUMBL (via C-terminal). Interacts with RBCK1. Interacts with LIMD1 (via LIM domains). Interacts with RSAD2/viperin. Interacts (via C-terminus) with EIF2AK2/PKR (via the kinase catalytic domain). Interacts with ZFAND5. Interacts with IL1RL1. Interacts with TRAFD1. Interacts with AJUBA. Interacts with MAVS/IPS1. Interacts (via TRAF domains) with DYNC2I2 (via WD domains). Interacts with IFIT3 (via N-terminus). Interacts with TICAM2. Interacts with CARD14. Interacts with CD40 and MAP3K8; the interaction is required for ERK activation. Interacts with TICAM1 and this interaction is enhanced in the presence of WDFY1. Interacts with TANK; this interaction increases in response to DNA damage. Interacts with USP10; this interaction increases in response to DNA damage. Interacts with ZC3H12A; this interaction increases in response to DNA damage and is stimulated by TANK. Interacts with WDFY3. Interacts with TRIM13. Interacts with GPS2. Interacts (via C-terminus) with SASH1. Interacts with LRRC19. Interacts with IL17RA and TRAF3IP2. Interacts with TOMM70. Interacts with AMBRA1; interaction is required to mediate 'Lys-63'-linked ubiquitination of ULK1. Interacts with CRBN; this interaction inhibits TLR4-mediated signaling by preventing TRAF6-mediated ubiquitination of ECSIT. Sumoylated on Lys-125, Lys-143 and Lys-473 with SUMO1. In terms of processing, polyubiquitinated on Lys-125 by TRAF3IP2; after cell stimulation with IL17A. Polyubiquitinated on Lys-125; after cell stimulation with IL1B or TGFB. This ligand-induced cell stimulation leads to dimerization/oligomerization of TRAF6 molecules, followed by auto-ubiquitination which involves UBE2N and UBE2V1 and leads to TRAF6 activation. This 'Lys-63' site-specific poly-ubiquitination appears to be associated with the activation of signaling molecules. Endogenous autoubiquitination occurs only for the cytoplasmic form. Deubiquitinated by USP10 in a TANK-dependent manner, leading to the negative regulation of NF-kappa-B signaling upon DNA damage. LRRC19 induces 'Lys-63' ubiquitination. Ubiquitinated at Lys-339 by the SCF(FBXL2) complex, leading to its degradation by the proteasome.

It localises to the cytoplasm. The protein localises to the cell cortex. The protein resides in the nucleus. Its subcellular location is the lipid droplet. It carries out the reaction S-ubiquitinyl-[E2 ubiquitin-conjugating enzyme]-L-cysteine + [acceptor protein]-L-lysine = [E2 ubiquitin-conjugating enzyme]-L-cysteine + N(6)-ubiquitinyl-[acceptor protein]-L-lysine.. The protein operates within protein modification; protein ubiquitination. Its function is as follows. E3 ubiquitin ligase that, together with UBE2N and UBE2V1, mediates the synthesis of 'Lys-63'-linked-polyubiquitin chains conjugated to proteins, such as ECSIT, IKBKG, IRAK1, AKT1 and AKT2. Also mediates ubiquitination of free/unanchored polyubiquitin chain that leads to MAP3K7 activation. Leads to the activation of NF-kappa-B and JUN. Seems to also play a role in dendritic cells (DCs) maturation and/or activation. Represses c-Myb-mediated transactivation, in B-lymphocytes. Adapter protein that seems to play a role in signal transduction initiated via TNF receptor, IL-1 receptor and IL-17 receptor. Regulates osteoclast differentiation by mediating the activation of adapter protein complex 1 (AP-1) and NF-kappa-B, in response to RANK-L stimulation. Together with MAP3K8, mediates CD40 signals that activate ERK in B-cells and macrophages, and thus may play a role in the regulation of immunoglobulin production. Acts as a regulator of the JNK and NF-kappa-B signaling pathways by initiating assembly of heterotypic 'Lys-63'-/'Lys-48'-linked branched ubiquitin chains that are then recognized by TAB2: TRAF6 catalyzes initial 'Lys-63'-linked-polyubiquitin chains that are then branched via 'Lys-48'-linked polyubiquitin by HUWE1. 'Lys-63'-/'Lys-48'-linked branched ubiquitin chains protect 'Lys-63'-linkages from CYLD deubiquitination. Also participates in the TCR signaling by ubiquitinating LAT. This is TNF receptor-associated factor 6 (TRAF6) from Bos taurus (Bovine).